We begin with the raw amino-acid sequence, 349 residues long: Estrogen receptor (349 aa).

The segment at residues 1-5 is a DNA-binding region (nuclear receptor); sequence YEVGM. Residues 1–38 form a disordered region; sequence YEVGMMKGGIRKDRRGGRMLKHKRQREENDSRNAGALT. Residues 12-24 show a composition bias toward basic residues; the sequence is KDRRGGRMLKHKR. The region spanning 65-301 is the NR LBD domain; sequence TADQMVSALL…DLLLEMLDAH (237 aa). Residues 306–327 form a disordered region; sequence PAAKGSPPSEDDPLNQLAVPSP.

The protein belongs to the nuclear hormone receptor family. NR3 subfamily. In terms of assembly, binds DNA as a homodimer. Can form a heterodimer with ER-beta.

The protein resides in the nucleus. The steroid hormones and their receptors are involved in the regulation of eukaryotic gene expression and affect cellular proliferation and differentiation in target tissues. In Anolis carolinensis (Green anole), this protein is Estrogen receptor (ESR1).